Consider the following 475-residue polypeptide: Exodeoxyribonuclease I (475 aa).

One can recognise an Exonuclease domain in the interval 13 to 192 (FHDYETFGTH…AMADVYATIA (180 aa)). The Mg(2+) site is built by Asp15 and Glu17. Residues Glu17 and Arg165 each contribute to the substrate site. Asp186 is a binding site for Mg(2+). Residues 202–355 (PRLFDYLFTH…KVVAIFAEAE (154 aa)) enclose the ExoI SH3-like domain. An ExoI C-terminal domain is found at 358–475 (TPSDNVDAQL…ALWQYAEEIV (118 aa)).

In terms of assembly, monomer. Interacts with ssb (via C-terminus); this interaction stimulates the exonuclease activity by recruiting the enzyme to its substrate. It depends on Mg(2+) as a cofactor.

The enzyme catalyses Exonucleolytic cleavage in the 3'- to 5'-direction to yield nucleoside 5'-phosphates.. Inhibited by 10 mM EDTA. Functionally, degrades single-stranded DNA (ssDNA) in a highly processive manner. Also functions as a DNA deoxyribophosphodiesterase that releases deoxyribose-phosphate moieties following the cleavage of DNA at an apurinic/apyrimidinic (AP) site by either an AP endonuclease or AP lyase. This is Exodeoxyribonuclease I (sbcB) from Escherichia coli (strain K12).